The primary structure comprises 103 residues: Endoribonuclease MazF3 (103 aa).

Belongs to the PemK/MazF family. Forms a complex with cognate antitoxin MazE3.

In terms of biological role, toxic component of a type II toxin-antitoxin (TA) system. Acts as an endoribonuclease, cleaving in U-rich regions. Neutralized by cognate antitoxin MazE3. This is Endoribonuclease MazF3 (mazF3) from Mycobacterium tuberculosis (strain CDC 1551 / Oshkosh).